A 412-amino-acid polypeptide reads, in one-letter code: MACRSGCCCNSIGSFNEDNARFLMLALLIIIYLLCGAAVFSALEQPKEKLAKERWAQRIEQFTNKYNLSQDDLKNFLRNYEEANVAGIRVDATRARWDFAGAFYFVGTVVSTIGFGMTTPVTIAGKIFLIFYGLIGCAATILFFNLFLERVITVIAFVLKFCHERRESRKAGPTQNCRRPSTDNRDRRTDSLAGWKPSVYCVMLILGVAAILVSCCASAMYSAAEGWDYLDALYFCFVAFSTIGFGDMVSNQREIYEAQVAYRVGNFLFILTGVCCIYSLFNVISIVIKQVLNWLLRRLETPCHCPGRGNRHPRRNAVVPGHMRSRRENSIETDAVNDSEADGRRMSGEMISMKDFLAANKVNLAIMQKQLSEMANGHPRQSGSSSRHNEFSGGVGALGIMNNRLAETSVDR.

Topologically, residues methionine 1–arginine 21 are cytoplasmic. Residues phenylalanine 22 to alanine 42 traverse the membrane as a helical segment. Positions tryptophan 97–methionine 117 form an intramembrane region, pore-forming. Positions 112, 113, and 114 each coordinate K(+). The selectivity filter 1 stretch occupies residues threonine 112–methionine 117. A helical transmembrane segment spans residues isoleucine 127–phenylalanine 147. The Cytoplasmic segment spans residues leucine 148–serine 198. Residues valine 199–alanine 219 traverse the membrane as a helical segment. Positions tyrosine 229–valine 249 form an intramembrane region, pore-forming. K(+) contacts are provided by threonine 242, isoleucine 243, glycine 244, and phenylalanine 245. Residues threonine 242–aspartate 247 are selectivity filter 2. A helical membrane pass occupies residues leucine 268–isoleucine 288. Residues lysine 289 to arginine 412 lie on the Cytoplasmic side of the membrane. The segment covering methionine 374 to serine 386 has biased composition (polar residues). Residues methionine 374–valine 395 form a disordered region.

The protein belongs to the two pore domain potassium channel (TC 1.A.1.8) family. In terms of assembly, homodimer. Heterodimer. Brain and heart.

It is found in the cell membrane. It catalyses the reaction K(+)(in) = K(+)(out). The channel conductance is activated by arachidonic acid and inhibited by Ba(2+) ions, volatile anesthetics such as halothane and antiarrhythmic drug mexiletine. Insensitive to extracellular pH change. In terms of biological role, k(+) channel that conducts outward rectifying tonic currents potentiated by purinergic signals. Homo- and heterodimerizes to form functional channels with distinct regulatory and gating properties. Contributes most of K(+) currents at the plasma membrane of resting microglia. Maintains a depolarized membrane potential required for proper ramified microglia morphology and phagocytosis, selectively mediating microglial pruning of presynaptic compartments at hippocampal excitatory synapses. Upon local release of ATP caused by neuronal injury or infection, it is potentiated by purinergic signaling and contributes to ATP-triggered K(+) efflux underlying microglial NLRP3 inflammasome assembly and IL1B release. The chain is Potassium channel, subfamily K, member 13 from Danio rerio (Zebrafish).